The chain runs to 186 residues: Cytochrome c oxidase subunit 4, mitochondrial (186 aa).

Residues 1–31 constitute a mitochondrion transit peptide; that stretch reads MLLSRTAVAVARRATAAPALRRSIATTVVRC. Zn(2+) contacts are provided by C118, H126, C142, and C145.

The protein belongs to the cytochrome c oxidase subunit 5B family. Component of the cytochrome c oxidase (complex IV, CIV), a multisubunit enzyme composed of 11 subunits. The complex is composed of a catalytic core of 3 subunits Cox1, Cox2 and Cox3, encoded in the mitochondrial DNA, and 8 supernumerary subunits Cox4, Cox5a/Cox5, Cox6, Cox7, Cox8, Cox7a/Cox9, Cox6b/Cox12 and Cox6a/Cox13, which are encoded in the nuclear genome. The complex exists as a monomer or a dimer and forms respiratory supercomplexes (SCs) in the inner mitochondrial membrane with NADH-ubiquinone oxidoreductase (complex I, CI) and ubiquinol-cytochrome c oxidoreductase (cytochrome b-c1 complex, complex III, CIII), resulting in various different assemblies (supercomplexes I(1)IV(1), I(1)III(3)IV(2), III(2)IV(1) and III(2)IV(2) as well as larger supercomplexes of compositions like I(1)III(2)IV(5-6)).

The protein localises to the mitochondrion inner membrane. The protein operates within energy metabolism; oxidative phosphorylation. Its function is as follows. Component of the cytochrome c oxidase, the last enzyme in the mitochondrial electron transport chain which drives oxidative phosphorylation. The respiratory chain contains 3 multisubunit complexes succinate dehydrogenase (complex II, CII), ubiquinol-cytochrome c oxidoreductase (cytochrome b-c1 complex, complex III, CIII) and cytochrome c oxidase (complex IV, CIV), that cooperate to transfer electrons derived from NADH and succinate to molecular oxygen, creating an electrochemical gradient over the inner membrane that drives transmembrane transport and the ATP synthase. Cytochrome c oxidase is the component of the respiratory chain that catalyzes the reduction of oxygen to water. Electrons originating from reduced cytochrome c in the intermembrane space (IMS) are transferred via the dinuclear copper A center (CU(A)) of Cox2 and heme A of Cox1 to the active site in Cox1, a binuclear center (BNC) formed by heme A3 and copper B (CU(B)). The BNC reduces molecular oxygen to 2 water molecules using 4 electrons from cytochrome c in the IMS and 4 protons from the mitochondrial matrix. This chain is Cytochrome c oxidase subunit 4, mitochondrial (cox-4), found in Neurospora crassa (strain ATCC 24698 / 74-OR23-1A / CBS 708.71 / DSM 1257 / FGSC 987).